We begin with the raw amino-acid sequence, 63 residues long: Insect toxin TbIT-1 (63 aa).

An LCN-type CS-alpha/beta domain is found at Lys2–Asx63. 4 cysteine pairs are disulfide-bonded: Cys12–Cys62, Cys16–Cys38, Cys24–Cys43, and Cys28–Cys45.

Belongs to the long (4 C-C) scorpion toxin superfamily. Sodium channel inhibitor family. Beta subfamily. As to expression, expressed by the venom gland.

The protein localises to the secreted. Beta toxins bind voltage-independently at site-4 of sodium channels (Nav) and shift the voltage of activation toward more negative potentials thereby affecting sodium channel activation and promoting spontaneous and repetitive firing. This toxin is only active against insects. The chain is Insect toxin TbIT-1 from Tityus bahiensis (Brazilian scorpion).